The sequence spans 279 residues: MEPKQRVVKPLKERVLPVVKNTQFVWFSGQVIVLISSVLYALQAIPFRSAPPFLFKSAAFGAIVAYAIVLYKTYSPNLTSRASWNKHFFARLMLDDNVQYFILALSMLIDRPILFSLAPYAIYATFHISTYLRSVLLPAIYPNISDAKTASYASRVSNLLNQYTRSQFQPAMQLVASLETFLLFRLFFGVFLRKNSISRLVGYIFFLRMRYTNSHFTRASIKAVSLRMDRLVADNRVPPVIKNAWHTFKTYVSKFGASPVGTAQSRPTASSSTTAPSST.

Helical transmembrane passes span 25–45 (VWFS…LQAI) and 50–70 (APPF…AIVL). A glycan (N-linked (GlcNAc...) asparagine) is linked at N77. A helical membrane pass occupies residues 100 to 122 (YFILALSMLIDRPILFSLAPYAI). Residue N143 is glycosylated (N-linked (GlcNAc...) asparagine). The helical transmembrane segment at 172-192 (MQLVASLETFLLFRLFFGVFL) threads the bilayer. The segment at 260–279 (VGTAQSRPTASSSTTAPSST) is disordered. Residues 262 to 279 (TAQSRPTASSSTTAPSST) show a composition bias toward low complexity.

Belongs to the PER33/POM33 family. Interacts with RTN1 and YOP1.

It localises to the golgi apparatus membrane. The protein resides in the endoplasmic reticulum membrane. Its subcellular location is the nucleus membrane. Required for the correct positioning of the cellular division plane by delimiting the actomyosin ring assembly at the cell equator. In Schizosaccharomyces pombe (strain 972 / ATCC 24843) (Fission yeast), this protein is Tetra-spanning protein 1 (tts1).